Reading from the N-terminus, the 644-residue chain is ATP-dependent zinc metalloprotease FtsH (644 aa).

Topologically, residues 1–4 (MAKN) are cytoplasmic. Residues 5–25 (LILWLVIAVVLMSVFQSFGPS) form a helical membrane-spanning segment. Topologically, residues 26–98 (ESNGRKVDYS…VGEPPEEPSL (73 aa)) are periplasmic. The helical transmembrane segment at 99-119 (LASIFISWFPMLLLIGVWIFF) threads the bilayer. Topologically, residues 120-644 (MRQMQGGGGK…NTMSEQLGDK (525 aa)) are cytoplasmic. Residue 192-199 (GPPGTGKT) participates in ATP binding. H414 contributes to the Zn(2+) binding site. Residue E415 is part of the active site. Zn(2+) is bound by residues H418 and D492. Residues 598–644 (VRPPAGWEEPGASNNAGDNGSPKAPRPVDEPRTPNPGNTMSEQLGDK) form a disordered region. Residues 632-644 (NPGNTMSEQLGDK) show a composition bias toward polar residues.

The protein in the central section; belongs to the AAA ATPase family. In the C-terminal section; belongs to the peptidase M41 family. As to quaternary structure, homohexamer. It depends on Zn(2+) as a cofactor.

The protein resides in the cell inner membrane. Acts as a processive, ATP-dependent zinc metallopeptidase for both cytoplasmic and membrane proteins. Plays a role in the quality control of integral membrane proteins. The protein is ATP-dependent zinc metalloprotease FtsH of Escherichia coli O157:H7.